We begin with the raw amino-acid sequence, 575 residues long: Septation ring formation regulator EzrA (575 aa).

Over 1-8 the chain is Extracellular; it reads MSNGQLIY. Residues 9–27 traverse the membrane as a helical segment; it reads LMVAIAVILVLAYVVAIFL. Residues 28-575 are Cytoplasmic-facing; sequence RKRNEGRLEA…YEKTRETIRF (548 aa). Coiled coils occupy residues 105–191, 265–301, 354–416, and 456–526; these read LKAS…FVTL, LYEA…LYDI, VRRI…IEKD, and TASN…IQEA.

The protein belongs to the EzrA family.

The protein resides in the cell membrane. In terms of biological role, negative regulator of FtsZ ring formation; modulates the frequency and position of FtsZ ring formation. Inhibits FtsZ ring formation at polar sites. Interacts either with FtsZ or with one of its binding partners to promote depolymerization. The polypeptide is Septation ring formation regulator EzrA (Streptococcus pneumoniae (strain ATCC BAA-255 / R6)).